The primary structure comprises 78 residues: Large ribosomal subunit protein bL28 (78 aa).

Residues 1-21 (MSRVCQVTGKRPVSGNNRSHA) form a disordered region.

Belongs to the bacterial ribosomal protein bL28 family.

In Sodalis glossinidius (strain morsitans), this protein is Large ribosomal subunit protein bL28.